Reading from the N-terminus, the 437-residue chain is UDP-N-acetylmuramate--L-alanine ligase (437 aa).

108-114 is a binding site for ATP; that stretch reads GAHGKTS.

It belongs to the MurCDEF family.

It localises to the cytoplasm. The catalysed reaction is UDP-N-acetyl-alpha-D-muramate + L-alanine + ATP = UDP-N-acetyl-alpha-D-muramoyl-L-alanine + ADP + phosphate + H(+). It participates in cell wall biogenesis; peptidoglycan biosynthesis. Its function is as follows. Cell wall formation. The polypeptide is UDP-N-acetylmuramate--L-alanine ligase (Staphylococcus aureus).